Reading from the N-terminus, the 434-residue chain is Glutamate-1-semialdehyde 2,1-aminomutase (434 aa).

At Lys270 the chain carries N6-(pyridoxal phosphate)lysine.

It belongs to the class-III pyridoxal-phosphate-dependent aminotransferase family. HemL subfamily. In terms of assembly, homodimer. It depends on pyridoxal 5'-phosphate as a cofactor.

The protein localises to the cytoplasm. It catalyses the reaction (S)-4-amino-5-oxopentanoate = 5-aminolevulinate. It participates in porphyrin-containing compound metabolism; protoporphyrin-IX biosynthesis; 5-aminolevulinate from L-glutamyl-tRNA(Glu): step 2/2. In Pelotomaculum thermopropionicum (strain DSM 13744 / JCM 10971 / SI), this protein is Glutamate-1-semialdehyde 2,1-aminomutase.